Here is a 187-residue protein sequence, read N- to C-terminus: Pyridoxal 5'-phosphate synthase subunit PdxT (187 aa).

G47–S49 contacts L-glutamine. C76 functions as the Nucleophile in the catalytic mechanism. L-glutamine-binding positions include R102 and I128 to R129. Active-site charge relay system residues include H165 and E167.

It belongs to the glutaminase PdxT/SNO family. In the presence of PdxS, forms a dodecamer of heterodimers. Only shows activity in the heterodimer.

The enzyme catalyses aldehydo-D-ribose 5-phosphate + D-glyceraldehyde 3-phosphate + L-glutamine = pyridoxal 5'-phosphate + L-glutamate + phosphate + 3 H2O + H(+). It catalyses the reaction L-glutamine + H2O = L-glutamate + NH4(+). It participates in cofactor biosynthesis; pyridoxal 5'-phosphate biosynthesis. Catalyzes the hydrolysis of glutamine to glutamate and ammonia as part of the biosynthesis of pyridoxal 5'-phosphate. The resulting ammonia molecule is channeled to the active site of PdxS. The polypeptide is Pyridoxal 5'-phosphate synthase subunit PdxT (Methanococcus maripaludis (strain C7 / ATCC BAA-1331)).